Consider the following 544-residue polypeptide: Chaperonin GroEL 1 (544 aa).

ATP is bound by residues 29–32, 86–90, glycine 413, and aspartate 495; these read TLGP and DGTTT. A disordered region spans residues 525–544; the sequence is PEPKTNTPASSGSGMSDYDY. The segment covering 528 to 538 has biased composition (polar residues); sequence KTNTPASSGSG.

It belongs to the chaperonin (HSP60) family. As to quaternary structure, forms a cylinder of 14 subunits composed of two heptameric rings stacked back-to-back. Interacts with the co-chaperonin GroES.

Its subcellular location is the cytoplasm. The catalysed reaction is ATP + H2O + a folded polypeptide = ADP + phosphate + an unfolded polypeptide.. Functionally, together with its co-chaperonin GroES, plays an essential role in assisting protein folding. The GroEL-GroES system forms a nano-cage that allows encapsulation of the non-native substrate proteins and provides a physical environment optimized to promote and accelerate protein folding. The chain is Chaperonin GroEL 1 from Synechococcus sp. (strain JA-2-3B'a(2-13)) (Cyanobacteria bacterium Yellowstone B-Prime).